Consider the following 698-residue polypeptide: Iron-sulfur clusters transporter ATM1, mitochondrial (698 aa).

A mitochondrion-targeting transit peptide spans 1–23 (MIPQLLQRSSRACPRYNPALYRL). Residues 24–113 (STTSQQRPGL…PKDDWGTKLR (90 aa)) are Mitochondrial matrix-facing. Residues 32-63 (GLTQTFWTSAPRREQPRTPTDSKPTTTKPSAV) are disordered. The segment covering 48 to 61 (RTPTDSKPTTTKPS) has biased composition (low complexity). Residues 114 to 135 (VSLAVSLLIGAKVLNVQVPFYF) traverse the membrane as a helical segment. The region spanning 114 to 404 (VSLAVSLLIG…LGSVYRELRQ (291 aa)) is the ABC transmembrane type-1 domain. Over 136-158 (KSIVDSMNIDVAAVGGTATTVAG) the chain is Mitochondrial intermembrane. A helical transmembrane segment spans residues 159 to 182 (AMILAYGASRIGATVFQELRNAVF). Over 183 to 231 (ASVAQNAIRKVACNVFDHLLRLDLTFHLSKQTGGLTRALDRGTKGISFI) the chain is Mitochondrial matrix. Residues 232–255 (LSSMVFHVLPTALEISMVCGILTY) form a helical membrane-spanning segment. Position 256 (Asn256) is a topological domain, mitochondrial intermembrane. Residues 257–277 (YGAKFAALTVLTMVSYTAFTI) form a helical membrane-spanning segment. Topologically, residues 278 to 343 (WTTAWRTKFR…NSIKVATSLA (66 aa)) are mitochondrial matrix. Residues 283–287 (RTKFR) and 346–349 (NSGQ) contribute to the glutathione site. The helical transmembrane segment at 344–362 (LLNSGQNIIFSSALTGMMY) threads the bilayer. Over 363-377 (LAANGVAEGTLTVGD) the chain is Mitochondrial intermembrane. The chain crosses the membrane as a helical span at residues 378–399 (LVMVNQLVFQLSVPLNFLGSVY). Gly396 serves as a coordination point for glutathione. The Mitochondrial matrix segment spans residues 400–698 (RELRQSLLDM…EEENDEQKKN (299 aa)). An ABC transporter domain is found at 439–675 (IKFENVNFAY…DGVYAELWSA (237 aa)). ATP is bound by residues Tyr448 and 472–483 (GPSGCGKSTLLR). The tract at residues 679 to 698 (MFGEDGKEKSEEENDEQKKN) is disordered. Over residues 682–698 (EDGKEKSEEENDEQKKN) the composition is skewed to basic and acidic residues.

The protein belongs to the ABC transporter superfamily. ABCB family. Heavy Metal importer (TC 3.A.1.210) subfamily. In terms of assembly, homodimer.

Its subcellular location is the mitochondrion inner membrane. Functionally, performs an essential function in the generation of cytoplasmic iron-sulfur proteins by mediating the ATP-dependent export of Fe/S cluster precursors synthesized by NFS1 and other mitochondrial proteins. Hydrolyzes ATP. Binds glutathione and may function by transporting a glutathione-conjugated iron-sulfur compound. The sequence is that of Iron-sulfur clusters transporter ATM1, mitochondrial from Gibberella zeae (strain ATCC MYA-4620 / CBS 123657 / FGSC 9075 / NRRL 31084 / PH-1) (Wheat head blight fungus).